Here is a 487-residue protein sequence, read N- to C-terminus: 4-alpha-glucanotransferase (487 aa).

This sequence belongs to the disproportionating enzyme family.

The protein localises to the cytoplasm. It catalyses the reaction Transfers a segment of a (1-&gt;4)-alpha-D-glucan to a new position in an acceptor, which may be glucose or a (1-&gt;4)-alpha-D-glucan.. Catalyzes a disproportionation reaction in which single or multiple glucose units from oligosaccharides are transferred to the 4-hydroxyl group of acceptor sugars. Glucose, maltose and maltotriose can act as acceptor, whereas of the three only maltotriose can act as donor. In Clostridium butyricum, this protein is 4-alpha-glucanotransferase (malQ).